Consider the following 924-residue polypeptide: Isoleucine--tRNA ligase (924 aa).

The short motif at 57 to 67 is the 'HIGH' region element; that stretch reads PYANGDIHMGH. Glu552 contributes to the L-isoleucyl-5'-AMP binding site. Residues 593–597 carry the 'KMSKS' region motif; the sequence is KMSKS. Residue Lys596 coordinates ATP. Residues Cys891, Cys894, Cys911, and Cys914 each contribute to the Zn(2+) site.

The protein belongs to the class-I aminoacyl-tRNA synthetase family. IleS type 1 subfamily. Monomer. It depends on Zn(2+) as a cofactor.

It is found in the cytoplasm. It catalyses the reaction tRNA(Ile) + L-isoleucine + ATP = L-isoleucyl-tRNA(Ile) + AMP + diphosphate. Catalyzes the attachment of isoleucine to tRNA(Ile). As IleRS can inadvertently accommodate and process structurally similar amino acids such as valine, to avoid such errors it has two additional distinct tRNA(Ile)-dependent editing activities. One activity is designated as 'pretransfer' editing and involves the hydrolysis of activated Val-AMP. The other activity is designated 'posttransfer' editing and involves deacylation of mischarged Val-tRNA(Ile). The polypeptide is Isoleucine--tRNA ligase (Geobacillus kaustophilus (strain HTA426)).